The following is an 820-amino-acid chain: Breast cancer anti-estrogen resistance protein 3 homolog (820 aa).

Ala2 is subject to N-acetylalanine. Ser32, Ser72, Ser77, Ser176, and Ser284 each carry phosphoserine. The interval 40 to 81 is disordered; sequence DAYQDVSIHGTLPRKKKGPPSIRSCDNAGHSKSPRQSSPLTQ. The SH2 domain maps to 148-247; it reads WYHGRIPRQV…QSGAIIFQPI (100 aa). Lys329 carries the N6-methyllysine modification. Positions 346-367 are disordered; the sequence is QSPSMDTSPCPSSPVFRTGSEP. 3 positions are modified to phosphoserine: Ser353, Ser358, and Ser370. Arg437 carries the omega-N-methylarginine modification. Phosphoserine is present on Ser466. One can recognise a Ras-GEF domain in the interval 543 to 813; that stretch reads DARVIAQHML…TALSRKLEPP (271 aa). Residues 739 to 743 form a mediates the interaction with BCAR1/p130CAS region; it reads LATAR.

In terms of assembly, part of a complex comprised of PTPRA, BCAR1, BCAR3 (via SH2 domain) and SRC; the formation of the complex is dependent on integrin mediated-tyrosine phosphorylation of PTPRA. Within the complex, interacts (via SH2 domain) with PTPRA (when phosphorylated on 'Tyr-825'). Interacts (via Ras-GEF domain) with BCAR1. Interacts (via Ras-GEF domain) with NEDD9. Interacts with PTK2B/FAK1. Interacts with PTPN1. Interacts (via SH2 domain) with EGFR (when tyrosine-phosphorylated). In terms of processing, phosphorylated on tyrosine residues. Abundantly expressed in the lung and brain, with lower expression in splenic lymphocytes and liver (at protein level). Expressed in splenic lymphocytes (at protein level). Expressed in the lymph node cortical region, periphery of the splenic white pulp and in alveolar lung fibroblasts. Expressed in epithelial cells in the lens equatorial region and early stage nucleated cortical lens fiber cells. Expressed in the thymus. Expressed in B-cells.

It localises to the cytoplasm. Its subcellular location is the cell junction. It is found in the focal adhesion. Functionally, acts as an adapter protein downstream of several growth factor receptors to promote cell proliferation, migration, and redistribution of actin fibers. Specifically involved in INS/insulin signaling pathway by mediating MAPK1/ERK2-MAPK3/ERK1 activation and DNA synthesis. Promotes insulin-mediated membrane ruffling. In response to vasoconstrictor peptide EDN1, involved in the activation of RAP1 downstream of PTK2B via interaction with phosphorylated BCAR1. Inhibits cell migration and invasion via regulation of TGFB-mediated matrix digestion, actin filament rearrangement, and inhibition of invadopodia activity. May inhibit TGFB-SMAD signaling, via facilitating BCAR1 and SMAD2 and/or SMAD3 interaction. Regulates EGF-induced DNA synthesis. Required for the maintenance of ocular lens morphology and structural integrity, potentially via regulation of focal adhesion complex signaling. Acts upstream of PTPRA to regulate the localization of BCAR1 and PTPRA to focal adhesions, via regulation of SRC-mediated phosphorylation of PTPRA. Positively regulates integrin-induced tyrosine phosphorylation of BCAR1. Acts as a guanine nucleotide exchange factor (GEF) for small GTPases RALA, RAP1A and RRAS. However, in a contrasting study, lacks GEF activity towards RAP1. The chain is Breast cancer anti-estrogen resistance protein 3 homolog (Bcar3) from Mus musculus (Mouse).